Reading from the N-terminus, the 439-residue chain is Exodeoxyribonuclease 7 large subunit (439 aa).

Belongs to the XseA family. In terms of assembly, heterooligomer composed of large and small subunits.

It localises to the cytoplasm. The catalysed reaction is Exonucleolytic cleavage in either 5'- to 3'- or 3'- to 5'-direction to yield nucleoside 5'-phosphates.. Its function is as follows. Bidirectionally degrades single-stranded DNA into large acid-insoluble oligonucleotides, which are then degraded further into small acid-soluble oligonucleotides. The polypeptide is Exodeoxyribonuclease 7 large subunit (Haemophilus influenzae (strain 86-028NP)).